The primary structure comprises 198 residues: Adenine phosphoribosyltransferase (198 aa).

The protein belongs to the purine/pyrimidine phosphoribosyltransferase family. As to quaternary structure, homodimer.

It localises to the cytoplasm. It carries out the reaction AMP + diphosphate = 5-phospho-alpha-D-ribose 1-diphosphate + adenine. The protein operates within purine metabolism; AMP biosynthesis via salvage pathway; AMP from adenine: step 1/1. Catalyzes a salvage reaction resulting in the formation of AMP, that is energically less costly than de novo synthesis. This is Adenine phosphoribosyltransferase from Serratia proteamaculans (strain 568).